We begin with the raw amino-acid sequence, 364 residues long: MPLTYRSTLTQFLIEERRRFPNASGDFNALILDVALACRAIARAVALGELGGAMGNHAAETGGSVNVQGETQKKLDVLSNEVFIRRTEWAGNLAGMASEEMELPYQIPQQYPRGKYMLVFDPLDGSSNIDVNVCVGSIFSVLRAPQDALDSGRDLNEADFLQAGRQQVAAGYAVYGPSTLLVLTVGNGVNGFTLDPNLGEFMLTHPKMQIPPETHEFAINASNSRFWQAPVKRYVDECLAGQTGPRGKDFNMRWIASMVAEAHRILMRGGVFMYPRDNKDPAKPGRLRLLYEANPVGMLMEQAGGRASTGELPMLDVQPTSLHQRIGLVFGSKNEVERIERYHAEPVQAEPSNPLFAERSLFRS.

Mg(2+)-binding residues include Glu99, Asp121, Leu123, and Asp124. Substrate is bound by residues 124–127 (DGSS) and Asn220. Glu292 is a binding site for Mg(2+).

The protein belongs to the FBPase class 1 family. As to quaternary structure, homotetramer. The cofactor is Mg(2+).

It is found in the cytoplasm. The enzyme catalyses beta-D-fructose 1,6-bisphosphate + H2O = beta-D-fructose 6-phosphate + phosphate. It functions in the pathway carbohydrate biosynthesis; gluconeogenesis. The sequence is that of Fructose-1,6-bisphosphatase class 1 1 from Albidiferax ferrireducens (strain ATCC BAA-621 / DSM 15236 / T118) (Rhodoferax ferrireducens).